The following is a 326-amino-acid chain: Beta-ketoacyl-[acyl-carrier-protein] synthase III (326 aa).

Residues Cys111 and His253 contribute to the active site. The ACP-binding stretch occupies residues 254-258 (QANSR). Residue Asn283 is part of the active site.

This sequence belongs to the thiolase-like superfamily. FabH family. As to quaternary structure, homodimer.

It is found in the cytoplasm. It catalyses the reaction malonyl-[ACP] + acetyl-CoA + H(+) = 3-oxobutanoyl-[ACP] + CO2 + CoA. Its pathway is lipid metabolism; fatty acid biosynthesis. Catalyzes the condensation reaction of fatty acid synthesis by the addition to an acyl acceptor of two carbons from malonyl-ACP. Catalyzes the first condensation reaction which initiates fatty acid synthesis and may therefore play a role in governing the total rate of fatty acid production. Possesses both acetoacetyl-ACP synthase and acetyl transacylase activities. Its substrate specificity determines the biosynthesis of branched-chain and/or straight-chain of fatty acids. This chain is Beta-ketoacyl-[acyl-carrier-protein] synthase III, found in Latilactobacillus sakei subsp. sakei (strain 23K) (Lactobacillus sakei subsp. sakei).